The following is a 325-amino-acid chain: MNIVVLAGGRSAERQVSWVTGKACKRALEDLGHRVKVIDPDEDLPLRLWQERQAGCDFVWIALHGPGGEDGVVQGMLDWLGLPYQGSGPLASALAMDKLVSKQIFRAAGIPTPDWQVWDDQNPLTWADCAAELGSPLVIKPSNNGSTVGISIVRDERSFAQGLELARSVSSRIFLERYVPGKEITLSILSGQVLPAIEIIPAQGDFYDYEAKYAPGGSRHLIPCSLSPAGLARCEAAGLKAYQALGCEGLARVDLRVDPEENPWVLEVNTLPGMTPTSLCPDAAAALGWTFTELVERMLQDALQKAQLTGSRHPQSSSATLGNAP.

In terms of domain architecture, ATP-grasp spans 102 to 300 (KQIFRAAGIP…FTELVERMLQ (199 aa)). 130-185 (AAELGSPLVIKPSNNGSTVGISIVRDERSFAQGLELARSVSSRIFLERYVPGKEIT) contacts ATP. 3 residues coordinate Mg(2+): Asp254, Glu267, and Asn269.

This sequence belongs to the D-alanine--D-alanine ligase family. Mg(2+) is required as a cofactor. Requires Mn(2+) as cofactor.

The protein localises to the cytoplasm. It catalyses the reaction 2 D-alanine + ATP = D-alanyl-D-alanine + ADP + phosphate + H(+). It participates in cell wall biogenesis; peptidoglycan biosynthesis. In terms of biological role, cell wall formation. This is D-alanine--D-alanine ligase from Synechococcus sp. (strain JA-2-3B'a(2-13)) (Cyanobacteria bacterium Yellowstone B-Prime).